A 628-amino-acid chain; its full sequence is Chaperone protein HtpG (628 aa).

The segment at 1–337 is a; substrate-binding; sequence MSEKKYTFET…SADLPLNVSR (337 aa). Residues 338–554 form a b region; sequence EILQHNKVID…DYGMSLHMQK (217 aa). Positions 555–628 are c; it reads MMEEAGQSFM…FVKLVNKYIR (74 aa).

This sequence belongs to the heat shock protein 90 family. As to quaternary structure, homodimer.

The protein localises to the cytoplasm. In terms of biological role, molecular chaperone. Has ATPase activity. The polypeptide is Chaperone protein HtpG (Francisella tularensis subsp. holarctica (strain FTNF002-00 / FTA)).